Here is a 148-residue protein sequence, read N- to C-terminus: Large ribosomal subunit protein bL9 (148 aa).

Belongs to the bacterial ribosomal protein bL9 family.

Binds to the 23S rRNA. The chain is Large ribosomal subunit protein bL9 from Caldicellulosiruptor saccharolyticus (strain ATCC 43494 / DSM 8903 / Tp8T 6331).